Consider the following 1021-residue polypeptide: SWI/SNF-related matrix-associated actin-dependent regulator of chromatin subfamily A containing DEAD/H box 1 (1021 aa).

Met1 carries the post-translational modification N-acetylmethionine. 2 disordered regions span residues 1–82 (MNLF…SLSC) and 124–151 (SEPSEDEESHDLPSVTRRNDSSELEDLS). The span at 7–19 (DRFRFEKRSKIEE) shows a compositional bias: basic and acidic residues. Low complexity predominate over residues 22–39 (EAAPQPSQARPSSPISLS). Phosphothreonine is present on Thr54. Residue Ser57 is modified to Phosphoserine. A Glycyl lysine isopeptide (Lys-Gly) (interchain with G-Cter in SUMO2) cross-link involves residue Lys77. Ser79, Ser124, Ser127, Ser132, Ser144, Ser145, and Ser151 each carry phosphoserine. The region spanning 156 to 198 (LKDAKLQTLKELFPQRSDSDLLKLIESTSTMDGAIAAALLMFG) is the CUE 1 domain. The tract at residues 201 to 246 (GGGPRKRKLSSSSEEDDVNDDQSVKQPRGDRGEESNESAEASSNWE) is disordered. 4 positions are modified to phosphoserine: Ser210, Ser213, Ser235, and Ser238. Positions 247–290 (KQESIVLKLQKEFPNFDKQELREVLKEHEWMYTEALESLKVFAE) constitute a CUE 2 domain. A Phosphoserine modification is found at Ser298. The disordered stretch occupies residues 329–366 (VKPQNGFNKKRKKNVFNPKKAVEDSEYDSGSDAGSSLD). Glycyl lysine isopeptide (Lys-Gly) (interchain with G-Cter in SUMO2) cross-links involve residues Lys330 and Lys466. One can recognise a Helicase ATP-binding domain in the interval 504-672 (ALVHKHGLNG…MSLLNFVMPH (169 aa)). An ATP-binding site is contributed by 516-524 (ADEMGLGKT). The short motif at 623 to 626 (DEGH) is the DEGH box element. The short motif at 716–733 (RRVKEEVLKLLPPKKDRI) is the Nuclear localization signal element. Lys719 is covalently cross-linked (Glycyl lysine isopeptide (Lys-Gly) (interchain with G-Cter in SUMO2)). A Helicase C-terminal domain is found at 853-1005 (ALGCILSELK…MTTVDEADEG (153 aa)). 892-899 (YLRLDGKT) is an ATP binding site. Lys991 is covalently cross-linked (Glycyl lysine isopeptide (Lys-Gly) (interchain with G-Cter in SUMO2)). The DEAD box signature appears at 1000–1003 (DEAD).

This sequence belongs to the SNF2/RAD54 helicase family. Binds to DNA preferentially in the vicinity of transcriptional start sites. Interacts with MSH2 and TRIM28. Part of a complex composed of TRIM28, HDAC1, HDAC2 and EHMT2. Interacts with PCNA.

The protein localises to the nucleus. It localises to the chromosome. It catalyses the reaction ATP + H2O = ADP + phosphate + H(+). Its function is as follows. DNA helicase that possesses intrinsic ATP-dependent nucleosome-remodeling activity and is both required for DNA repair and heterochromatin organization. Promotes DNA end resection of double-strand breaks (DSBs) following DNA damage: probably acts by weakening histone DNA interactions in nucleosomes flanking DSBs. Required for the restoration of heterochromatin organization after replication. Acts at replication sites to facilitate the maintenance of heterochromatin by directing H3 and H4 histones deacetylation, H3 'Lys-9' trimethylation (H3K9me3) and restoration of silencing. The protein is SWI/SNF-related matrix-associated actin-dependent regulator of chromatin subfamily A containing DEAD/H box 1 (Smarcad1) of Mus musculus (Mouse).